A 275-amino-acid polypeptide reads, in one-letter code: Urease accessory protein UreD (275 aa).

Belongs to the UreD family. In terms of assembly, ureD, UreF and UreG form a complex that acts as a GTP-hydrolysis-dependent molecular chaperone, activating the urease apoprotein by helping to assemble the nickel containing metallocenter of UreC. The UreE protein probably delivers the nickel.

The protein localises to the cytoplasm. In terms of biological role, required for maturation of urease via the functional incorporation of the urease nickel metallocenter. The polypeptide is Urease accessory protein UreD (Cereibacter sphaeroides (strain ATCC 17023 / DSM 158 / JCM 6121 / CCUG 31486 / LMG 2827 / NBRC 12203 / NCIMB 8253 / ATH 2.4.1.) (Rhodobacter sphaeroides)).